The primary structure comprises 372 residues: MGLTSLQVCMDSDWLQESESSGGSMLDSSTNSPSAADILAACSTRPQASAVAVAAAALMDGGRRLRPPHDHPQKCPRCESTHTKFCYYNNYSLSQPRYFCKTCRRYWTKGGTLRNIPVGGGCRKNKKPSSSNSSSSTSSGKKPSNIVTANTSDLMALAHSHQNYQHSPLGFSHFGGMMGSYSTPEHGNVGFLESKYGGLLSQSPRPIDFLDSKFDLMGVNNDNLVMVNHGSNGDHHHHHNHHMGLNHGVGLNNNNNNGGFNGISTGGNGNGGGLMDISTCQRLMLSNYDHHHYNHQEDHQRVATIMDVKPNPKLLSLDWQQDQCYSNGGGSGGAGKSDGGGYGNGGYINGLGSSWNGLMNGYGTSTKTNSLV.

The Dof-type zinc-finger motif lies at 73 to 127 (QKCPRCESTHTKFCYYNNYSLSQPRYFCKTCRRYWTKGGTLRNIPVGGGCRKNKK). Zn(2+)-binding residues include C75, C78, C100, and C103. Positions 117-146 (PVGGGCRKNKKPSSSNSSSSTSSGKKPSNI) are disordered. A compositionally biased stretch (low complexity) spans 128-145 (PSSSNSSSSTSSGKKPSN).

The PEAR proteins (e.g. DOF2.4, DOF5.1, DOF3.2, DOF1.1, DOF5.6 and DOF5.3) form a short-range concentration gradient that peaks at protophloem sieve elements (PSE). Preferentially expressed in the vasculature of all organs, including seedlings, roots, stems, buds, leaves, flowers and siliques, and particularly in the cambium, phloem and interfascicular parenchyma cells of inflorescence stems.

The protein resides in the nucleus. Its function is as follows. Transcription factor that binds specifically to a 5'-AA[AG]G-3' consensus core sequence. Promotes expression. The PEAR proteins (e.g. DOF2.4, DOF5.1, DOF3.2, DOF1.1, DOF5.6 and DOF5.3) activate gene expression that promotes radial growth of protophloem sieve elements. Involved in the regulation of interfascicular cambium formation and vascular tissue development, particularly at a very early stage during inflorescence stem development; promotes both cambium activity and phloem specification, but prevents xylem specification. The sequence is that of Dof zinc finger protein DOF5.6 from Arabidopsis thaliana (Mouse-ear cress).